Here is a 513-residue protein sequence, read N- to C-terminus: Histidine ammonia-lyase (513 aa).

The 5-imidazolinone (Ala-Gly) cross-link spans 144 to 146 (ASG). Ser145 bears the 2,3-didehydroalanine (Ser) mark.

The protein belongs to the PAL/histidase family. Contains an active site 4-methylidene-imidazol-5-one (MIO), which is formed autocatalytically by cyclization and dehydration of residues Ala-Ser-Gly.

It is found in the cytoplasm. The catalysed reaction is L-histidine = trans-urocanate + NH4(+). It participates in amino-acid degradation; L-histidine degradation into L-glutamate; N-formimidoyl-L-glutamate from L-histidine: step 1/3. The protein is Histidine ammonia-lyase of Streptococcus pyogenes serotype M5 (strain Manfredo).